A 216-amino-acid chain; its full sequence is Guanylate kinase (216 aa).

Residues 11 to 189 enclose the Guanylate kinase-like domain; it reads GVLIVISGPS…AVKKIEAILL (179 aa). 18–25 serves as a coordination point for ATP; the sequence is GPSGAGKG.

The protein belongs to the guanylate kinase family.

The protein resides in the cytoplasm. It carries out the reaction GMP + ATP = GDP + ADP. Essential for recycling GMP and indirectly, cGMP. This Clostridium perfringens (strain SM101 / Type A) protein is Guanylate kinase.